We begin with the raw amino-acid sequence, 68 residues long: Beta-defensin 1 (68 aa).

Residues 1-21 (MRTSYLLLFTLCLLLSEMASG) form the signal peptide. The propeptide occupies 22–32 (DNFLTGLGHRS). Intrachain disulfides connect Cys-37–Cys-66, Cys-44–Cys-59, and Cys-49–Cys-67.

This sequence belongs to the beta-defensin family. In terms of assembly, monomer. Homodimer.

The protein localises to the secreted. It is found in the membrane. Has bactericidal activity. May act as a ligand for C-C chemokine receptor CCR6. Positively regulates the sperm motility and bactericidal activity in a CCR6-dependent manner. Binds to CCR6 and triggers Ca2+ mobilization in the sperm which is important for its motility. The chain is Beta-defensin 1 (DEFB1) from Macaca mulatta (Rhesus macaque).